Reading from the N-terminus, the 435-residue chain is Proline and serine-rich protein 2 (435 aa).

Basic and acidic residues predominate over residues 1–10 (MPVTHRKSDA). A disordered region spans residues 1–22 (MPVTHRKSDASDMNSDTSPSCR). Position 8 is a phosphoserine (Ser8). Positions 11–20 (SDMNSDTSPS) are enriched in polar residues. A Phosphoserine modification is found at Ser43. The residue at position 45 (Thr45) is a Phosphothreonine. Low complexity-rich tracts occupy residues 92–102 (PSLEESTSSPS) and 113–126 (PAPG…LPEG). 2 disordered regions span residues 92 to 276 (PSLE…RAAV) and 295 to 420 (AFPA…SEEA). Residue Thr146 is modified to Phosphothreonine. The segment covering 146-169 (TPPPPDPPAPETLLAPPPLPSTPD) has biased composition (pro residues). A Phosphoserine modification is found at Ser166. A Phosphothreonine modification is found at Thr167. Phosphoserine occurs at positions 179, 212, and 215. A compositionally biased stretch (low complexity) spans 228-237 (PAARGPRSGD). At Arg252 the chain carries Asymmetric dimethylarginine; alternate. An Omega-N-methylarginine; alternate modification is found at Arg252. A compositionally biased stretch (gly residues) spans 302-311 (AGEGAPGGGS). Ser312 bears the Phosphoserine mark. An Omega-N-methylarginine; alternate modification is found at Arg320. At Arg320 the chain carries Dimethylated arginine; alternate. Residue Arg378 is modified to Omega-N-methylarginine. Phosphoserine is present on Ser400. Residue Arg414 is modified to Omega-N-methylarginine.

The protein is Proline and serine-rich protein 2 (PROSER2) of Homo sapiens (Human).